The primary structure comprises 681 residues: U3 small nucleolar ribonucleoprotein protein MPP10 (681 aa).

Residues S61, S120, and S140 each carry the phosphoserine modification. Residues 109–139 are a coiled coil; that stretch reads ECEDEECEEDASEVEADNQENLETDLDEEQL. Residues 111–144 are compositionally biased toward acidic residues; it reads EDEECEEDASEVEADNQENLETDLDEEQLSDEGG. 3 disordered regions span residues 111-202, 215-256, and 268-365; these read EDEE…SVVD, LEKV…GRQK, and YKDF…EKRQ. A compositionally biased stretch (basic and acidic residues) spans 145–163; that stretch reads DVPKGRDRAKSSRKSDPRK. A phosphoserine mark is found at S164, S168, and S172. Residues 215–227 show a composition bias toward basic and acidic residues; sequence LEKVEKEEEKRPD. Composition is skewed to acidic residues over residues 228-248 and 273-322; these read GEEEDEEDIDLFEDIDSDESE and DPVE…EDEN. Phosphoserine occurs at positions 244, 247, 277, and 346. Residues 349–383 adopt a coiled-coil conformation; the sequence is AVKQESDEVKSSFEKRQEKMNEKIASLEKELLDKK. K351 participates in a covalent cross-link: Glycyl lysine isopeptide (Lys-Gly) (interchain with G-Cter in SUMO2). Over residues 352–365 the composition is skewed to basic and acidic residues; it reads QESDEVKSSFEKRQ. Glycyl lysine isopeptide (Lys-Gly) (interchain with G-Cter in SUMO2) cross-links involve residues K383 and K395. Positions 471–491 form a coiled coil; the sequence is AEIYEQEYLKLNQQKTEEEDN. Residue K556 forms a Glycyl lysine isopeptide (Lys-Gly) (interchain with G-Cter in SUMO2) linkage. A compositionally biased stretch (basic and acidic residues) spans 560 to 576; sequence KAGDLKTAAEKTATDKK. A disordered region spans residues 560-644; it reads KAGDLKTAAE…RKDKPLKSSQ (85 aa). The stretch at 575–604 forms a coiled coil; sequence KKRERRKKKYQKRLKIKEKEKRKKLLEKNN. Residues 577 to 599 show a composition bias toward basic residues; sequence RERRKKKYQKRLKIKEKEKRKKL. An N6-acetyllysine modification is found at K609. Positions 630-640 are enriched in basic and acidic residues; the sequence is LLKDERKDKPL. Glycyl lysine isopeptide (Lys-Gly) (interchain with G-Cter in SUMO2) cross-links involve residues K632 and K649. Positions 657–681 are disordered; sequence QINDAKQPEKIKKKKQDISVHKLKL. Residues 662-681 are compositionally biased toward basic and acidic residues; sequence KQPEKIKKKKQDISVHKLKL.

This sequence belongs to the MPP10 family. Part of the small subunit (SSU) processome, composed of more than 70 proteins and the RNA chaperone small nucleolar RNA (snoRNA) U3. Component of a heterotrimeric complex containing IMP3, IMP4 and MPHOSPH10. Interacts with IMP3 and IMP4. In terms of processing, phosphorylated in M (mitotic) phase.

Its subcellular location is the nucleus. It is found in the nucleolus. It localises to the chromosome. Component of the 60-80S U3 small nucleolar ribonucleoprotein (U3 snoRNP). Required for the early cleavages during pre-18S ribosomal RNA processing. Part of the small subunit (SSU) processome, first precursor of the small eukaryotic ribosomal subunit. During the assembly of the SSU processome in the nucleolus, many ribosome biogenesis factors, an RNA chaperone and ribosomal proteins associate with the nascent pre-rRNA and work in concert to generate RNA folding, modifications, rearrangements and cleavage as well as targeted degradation of pre-ribosomal RNA by the RNA exosome. The protein is U3 small nucleolar ribonucleoprotein protein MPP10 (Mphosph10) of Mus musculus (Mouse).